The sequence spans 392 residues: WD repeat-containing protein GTS1 (392 aa).

WD repeat units lie at residues 81–124, 128–167, 171–211, and 323–368; these read GHSD…QVSR, GNDQ…QVAC, SHMD…NDDD, and GHID…TEIN.

As to expression, expressed in germinating seeds, rosettes leaves, flowers and siliques.

Functionally, involved in the control of plant growth development. Acts as negative regulator of seed germination, cell division in meristematic regions, plant growth and overall biomass accumulation. May function by regulating ribosome activities and biogenesis in plant cells. The polypeptide is WD repeat-containing protein GTS1 (Arabidopsis thaliana (Mouse-ear cress)).